We begin with the raw amino-acid sequence, 367 residues long: Anhydro-N-acetylmuramic acid kinase (367 aa).

ATP is bound at residue 13 to 20; sequence GTSMDGAD.

The protein belongs to the anhydro-N-acetylmuramic acid kinase family.

The enzyme catalyses 1,6-anhydro-N-acetyl-beta-muramate + ATP + H2O = N-acetyl-D-muramate 6-phosphate + ADP + H(+). It functions in the pathway amino-sugar metabolism; 1,6-anhydro-N-acetylmuramate degradation. The protein operates within cell wall biogenesis; peptidoglycan recycling. Its function is as follows. Catalyzes the specific phosphorylation of 1,6-anhydro-N-acetylmuramic acid (anhMurNAc) with the simultaneous cleavage of the 1,6-anhydro ring, generating MurNAc-6-P. Is required for the utilization of anhMurNAc either imported from the medium or derived from its own cell wall murein, and thus plays a role in cell wall recycling. This is Anhydro-N-acetylmuramic acid kinase from Neisseria gonorrhoeae (strain ATCC 700825 / FA 1090).